We begin with the raw amino-acid sequence, 360 residues long: Phosphoserine aminotransferase (360 aa).

Arg41 is a binding site for L-glutamate. Pyridoxal 5'-phosphate is bound by residues Trp101, Thr152, Asp172, and Gln195. An N6-(pyridoxal phosphate)lysine modification is found at Lys196. A pyridoxal 5'-phosphate-binding site is contributed by Asn237–Thr238.

Belongs to the class-V pyridoxal-phosphate-dependent aminotransferase family. SerC subfamily. In terms of assembly, homodimer. Requires pyridoxal 5'-phosphate as cofactor.

It is found in the cytoplasm. The catalysed reaction is O-phospho-L-serine + 2-oxoglutarate = 3-phosphooxypyruvate + L-glutamate. The enzyme catalyses 4-(phosphooxy)-L-threonine + 2-oxoglutarate = (R)-3-hydroxy-2-oxo-4-phosphooxybutanoate + L-glutamate. It functions in the pathway amino-acid biosynthesis; L-serine biosynthesis; L-serine from 3-phospho-D-glycerate: step 2/3. The protein operates within cofactor biosynthesis; pyridoxine 5'-phosphate biosynthesis; pyridoxine 5'-phosphate from D-erythrose 4-phosphate: step 3/5. In terms of biological role, catalyzes the reversible conversion of 3-phosphohydroxypyruvate to phosphoserine and of 3-hydroxy-2-oxo-4-phosphonooxybutanoate to phosphohydroxythreonine. The chain is Phosphoserine aminotransferase from Paraburkholderia phymatum (strain DSM 17167 / CIP 108236 / LMG 21445 / STM815) (Burkholderia phymatum).